The following is a 59-amino-acid chain: Single-pass membrane and coiled-coil domain-containing protein 4 (59 aa).

The segment at 1 to 23 (MRQLKGKPKKETSKDKKERKQAM) is disordered. Residues 9–22 (KKETSKDKKERKQA) are compositionally biased toward basic and acidic residues. A coiled-coil region spans residues 9-31 (KKETSKDKKERKQAMQEARQQIT). The chain crosses the membrane as a helical span at residues 32–52 (TVVLPTLAVVVALIVVFVYVA).

The protein belongs to the SMCO4 family.

It localises to the membrane. The chain is Single-pass membrane and coiled-coil domain-containing protein 4 (smco4) from Xenopus laevis (African clawed frog).